The following is a 158-amino-acid chain: C-type lectin (158 aa).

The first 23 residues, 1–23, serve as a signal peptide directing secretion; that stretch reads MWQFTVVSLGWLAVFLSLSGAKG. Cystine bridges form between Cys26-Cys37, Cys54-Cys154, and Cys129-Cys146. One can recognise a C-type lectin domain in the interval 33–155; that stretch reads RNGVCNKLFP…CASLHPFICQ (123 aa). Positions 119–121 match the Mannose-binding motif; sequence EPN. Residues Glu127, Asn142, and Asp143 each contribute to the Ca(2+) site.

It belongs to the true venom lectin family. Expressed by the venom gland.

It is found in the secreted. Mannose-binding lectin which recognizes specific carbohydrate structures and agglutinates a variety of animal cells by binding to cell-surface glycoproteins and glycolipids. May be a calcium-dependent lectin. This Cerberus rynchops (Dog-faced water snake) protein is C-type lectin.